The sequence spans 309 residues: MSIRIIPQDELGSSEKRTADMIPPLLFPRLKNLYNRRAERLRELAENNPLGDYLRFAALIAHAQEVVLYDHPLEMDLTARIKEASAQGKPPLDIHVLPRDKHWQKLLMALIAELKPEMSGPALAVIENLEKASTQELEDMASALFASDFSSVSSDKAPFIWAALSLYWAQMANLIPGKARAEYGEQRQYCPVCGSMPVSSMVQIGTTQGLRYLHCNLCETEWHVVRVKCSNCEQSGKLHYWSLDDEQAAIKAESCDDCGTYLKILYQEKEPKVEAVADDLASLVLDARMEQEGYARSSINPFLFPGEGE.

The protein belongs to the FdhE family.

It is found in the cytoplasm. Functionally, necessary for formate dehydrogenase activity. This is Protein FdhE from Escherichia coli O139:H28 (strain E24377A / ETEC).